The primary structure comprises 168 residues: NADH-ubiquinone oxidoreductase chain 6 (168 aa).

Helical transmembrane passes span 1 to 21, 27 to 47, 50 to 70, 87 to 107, and 143 to 163; these read MKMM…VAFA, IYGG…VVSL, VFLG…VFGY, VVAF…YFMS, and WALA…LEVV.

It belongs to the complex I subunit 6 family. In terms of assembly, core subunit of respiratory chain NADH dehydrogenase (Complex I) which is composed of 45 different subunits.

It localises to the mitochondrion inner membrane. The enzyme catalyses a ubiquinone + NADH + 5 H(+)(in) = a ubiquinol + NAD(+) + 4 H(+)(out). Functionally, core subunit of the mitochondrial membrane respiratory chain NADH dehydrogenase (Complex I) which catalyzes electron transfer from NADH through the respiratory chain, using ubiquinone as an electron acceptor. Essential for the catalytic activity and assembly of complex I. The protein is NADH-ubiquinone oxidoreductase chain 6 (MT-ND6) of Didelphis virginiana (North American opossum).